A 331-amino-acid chain; its full sequence is Phospholipase A2 inhibitor (331 aa).

An N-terminal signal peptide occupies residues 1–23 (MKSSVPSLLIACLVMSLNSYTQQ). A glycan (N-linked (GlcNAc...) asparagine) is linked at Asn35. LRR repeat units lie at residues 78–101 (LPNLQELHLSNNRLKTLPSGLFRN), 103–125 (PQLHTLDLSTNHLEDLPPEIFTN), 127–149 (SSLILLPLSENQLAELHPSWFQT), 150–173 (LGELRILGLDHNQVKEIPISCFDK), 175–197 (KKLTSLDLSFNLLRRLAPEMFSG), 199–221 (DNLEKLILESNPIQCIVGRTFHW), 223–244 (PKLTVLSLKNSSLTNIMGFFQP), and 245–268 (LEQLELLDLSDNELTTMEPPVYKT). A glycan (N-linked (GlcNAc...) asparagine) is linked at Asn125. N-linked (GlcNAc...) asparagine glycosylation is present at Asn232. Asn271 carries an N-linked (GlcNAc...) asparagine glycan. The LRRCT domain maps to 279-330 (NPWACDCRLDNLLTWVNEHNIHLYSKEEIVCASPKHFKGECATSLHKSQICP).

Homotrimer.

It is found in the secreted. Functionally, inhibits the enzymatic activity of the basic phospholipase A2 (PLA2). The protein is Phospholipase A2 inhibitor of Gloydius brevicaudus siniticus (Chinese mamushi).